The chain runs to 433 residues: Beta-agarase AgaA (433 aa).

An N-terminal signal peptide occupies residues 1 to 20 (MRKITSILLTCVMGCTATYA). Residues 21 to 295 (ADWDGVPVPA…WVRFYKPVPI (275 aa)) form the GH16 domain. The active-site Nucleophile is the glutamate 147. Glutamate 152 serves as the catalytic Proton donor. One can recognise a CBM6 domain in the interval 300–431 (TTVELGNFHN…QWNGDEIRFV (132 aa)).

This sequence belongs to the glycosyl hydrolase 16 family. As to quaternary structure, monomer.

Its subcellular location is the periplasm. The enzyme catalyses Hydrolysis of (1-&gt;4)-beta-D-galactosidic linkages in agarose, giving the tetramer as the predominant product.. Activity is abolished by Hg(2+), Cu(2+), Pb(2+) and Zn(2+) ions, but is not affected by NaCl up to at least 1.0 M, Mg(2+), K(+) and Ca(2+). Not affected by iodoacetamide, p-chloromercuribenzoate, dithiothreitol, 2-mercaptoethanol, EDTA and sodium dodecyl sulfate. Inhibited by N-bromosuccinimide. Endo-type beta-agarase, which produces neoagarotetraose (NA4) as the main final product, with a small amount of neoagarohexaose (NA6) and neoagarobiose (NA2). This chain is Beta-agarase AgaA, found in Microbulbifer thermotolerans.